A 295-amino-acid polypeptide reads, in one-letter code: G1/S-specific cyclin-D1 (295 aa).

In terms of domain architecture, Cyclin N-terminal spans 28 to 152 (LRAMLKAEET…LLVNKLKWNL (125 aa)). Residues 264–295 (QQSLDPKAAEEEEEEEEADLACTPTDVRDVNI) form a disordered region. Lys270 participates in a covalent cross-link: Glycyl lysine isopeptide (Lys-Gly) (interchain with G-Cter in ubiquitin). The span at 273–282 (EEEEEEEEAD) shows a compositional bias: acidic residues. The residue at position 286 (Thr286) is a Phosphothreonine.

The protein belongs to the cyclin family. Cyclin D subfamily. As to quaternary structure, interacts with either CDK4 or CDK6 protein kinase to form a serine/threonine kinase holoenzyme complex. The cyclin subunit imparts substrate specificity to the complex. Component of the ternary complex CCND1/CDK4/CDKN1B required for nuclear translocation and modulation of CDK4-mediated kinase activity. Interacts directly with CDKN1B. Can form similar complexes with either CDKN1A or CDKN2A. Interacts with UHRF2; the interaction ubiquitinates CCND1 and appears to occur independently of phosphorylation. Interacts with USP2. Interacts (via cyclin N-terminal domain) with INSM1 (via N-terminal region); the interaction competes with the binding of CCND1 to CDK4 during cell cycle progression and inhibits CDK4 activity. Interacts with CDK4; the interaction is prevented with the binding of CCND1 to INSM1 during cell cycle progression. Post-translationally, phosphorylation at Thr-286 by MAP kinases is required for ubiquitination and degradation by the DCX(AMBRA1) complex. It also plays an essential role for recognition by the FBXO31 component of SCF (SKP1-cullin-F-box) protein ligase complex following DNA damage. In terms of processing, ubiquitinated at Lys-270 by the DCX(AMBRA1) complex during the transition from G1 to S cell phase, leading to its degradation: ubiquitination is dependent on Thr-286 phosphorylation. The DCX(AMBRA1) complex represents the major regulator of CCND1 stability during the G1/S transition. Also ubiquitinated by the SCF(FBXO4) and Cul7-RING(FBXW8) ubiquitin-protein ligase complexes. Following DNA damage it is ubiquitinated by the SCF(FBXO31) protein ligase complex. SCF(FBXO31) ubiquitination is dependent on Thr-286 phosphorylation. Ubiquitinated also by UHRF2 apparently in a phosphorylation-independent manner. Ubiquitination leads to its degradation and G1 arrest. Deubiquitinated by USP2; leading to its stabilization.

Its subcellular location is the nucleus. The protein resides in the cytoplasm. The protein localises to the nucleus membrane. Regulatory component of the cyclin D1-CDK4 (DC) complex that phosphorylates and inhibits members of the retinoblastoma (RB) protein family including RB1 and regulates the cell-cycle during G(1)/S transition. Phosphorylation of RB1 allows dissociation of the transcription factor E2F from the RB/E2F complex and the subsequent transcription of E2F target genes which are responsible for the progression through the G(1) phase. Hypophosphorylates RB1 in early G(1) phase. Cyclin D-CDK4 complexes are major integrators of various mitogenenic and antimitogenic signals. Also a substrate for SMAD3, phosphorylating SMAD3 in a cell-cycle-dependent manner and repressing its transcriptional activity. Component of the ternary complex, cyclin D1/CDK4/CDKN1B, required for nuclear translocation and activity of the cyclin D-CDK4 complex. Exhibits transcriptional corepressor activity with INSM1 on the NEUROD1 and INS promoters in a cell cycle-independent manner. This chain is G1/S-specific cyclin-D1 (CCND1), found in Canis lupus familiaris (Dog).